A 125-amino-acid chain; its full sequence is Small ribosomal subunit protein bS6 (125 aa).

A disordered region spans residues 97 to 125 (TEASPMKAAKEERKPLAEVENNDFEDAEE). Positions 104 to 113 (AAKEERKPLA) are enriched in basic and acidic residues. Residues 116 to 125 (ENNDFEDAEE) show a composition bias toward acidic residues.

This sequence belongs to the bacterial ribosomal protein bS6 family.

Functionally, binds together with bS18 to 16S ribosomal RNA. This Haemophilus influenzae (strain PittEE) protein is Small ribosomal subunit protein bS6.